A 420-amino-acid polypeptide reads, in one-letter code: Putative FBD-associated F-box protein At1g78730 (420 aa).

One can recognise an F-box domain in the interval 21–71 (LDWLRKLPDSLLCQVFLNLPTKDVVKTSVLSSTWGNIWRSVPGLDLGYGDF). Residues 341–390 (ISILPGPQCNLPALEFVDILKPMVEKETELKLMSYFLEKSTILKKLTLRL) enclose the FBD domain.

The protein is Putative FBD-associated F-box protein At1g78730 of Arabidopsis thaliana (Mouse-ear cress).